Consider the following 407-residue polypeptide: Peptidase T (407 aa).

H82 contacts Zn(2+). D84 is an active-site residue. D143 contributes to the Zn(2+) binding site. E177 functions as the Proton acceptor in the catalytic mechanism. Zn(2+) is bound by residues E178, D200, and H382.

This sequence belongs to the peptidase M20B family. It depends on Zn(2+) as a cofactor.

It is found in the cytoplasm. It catalyses the reaction Release of the N-terminal residue from a tripeptide.. Its function is as follows. Cleaves the N-terminal amino acid of tripeptides. The chain is Peptidase T from Streptococcus pyogenes serotype M28 (strain MGAS6180).